A 500-amino-acid polypeptide reads, in one-letter code: Glycerol kinase (500 aa).

ADP is bound at residue threonine 13. Residues threonine 13, threonine 14, and serine 15 each contribute to the ATP site. Threonine 13 contacts sn-glycerol 3-phosphate. Arginine 17 serves as a coordination point for ADP. The sn-glycerol 3-phosphate site is built by arginine 83, glutamate 84, tyrosine 135, and aspartate 244. 5 residues coordinate glycerol: arginine 83, glutamate 84, tyrosine 135, aspartate 244, and glutamine 245. Residues threonine 266 and glycine 309 each contribute to the ADP site. Positions 266, 309, 313, and 410 each coordinate ATP. Residues glycine 410 and asparagine 414 each coordinate ADP.

Belongs to the FGGY kinase family.

The enzyme catalyses glycerol + ATP = sn-glycerol 3-phosphate + ADP + H(+). It participates in polyol metabolism; glycerol degradation via glycerol kinase pathway; sn-glycerol 3-phosphate from glycerol: step 1/1. Inhibited by fructose 1,6-bisphosphate (FBP). In terms of biological role, key enzyme in the regulation of glycerol uptake and metabolism. Catalyzes the phosphorylation of glycerol to yield sn-glycerol 3-phosphate. This is Glycerol kinase from Burkholderia ambifaria (strain MC40-6).